Here is a 239-residue protein sequence, read N- to C-terminus: MSRDPILSLPWPDARPLPDTFFDRDALLVARELLGKVIRHRQGNLWLAARIIETEAYYLEEKGSHASLGYTEKRKALFLDGGHIYMYYARGGDSLNFSAGGPGNAVLIKSGHPWLDRISDHTALERMQSLNPDSQGRPREIGRLCAGQTLLCKAMGLKVPEWDAQRFDPQRLFVDDVGERPSQVIQAARLGIPKGRDEHLPYRFVDATFAAFCTRNPLRRGQVAGRDYHLLGHQDPHLQ.

The protein belongs to the DNA glycosylase MPG family.

This chain is Putative 3-methyladenine DNA glycosylase, found in Pseudomonas aeruginosa (strain LESB58).